A 142-amino-acid polypeptide reads, in one-letter code: Sorting nexin-3 (142 aa).

Residues Asn21–Asp138 form the PX domain. Positions 64, 66, 90, 95, and 104 each coordinate a 1,2-diacyl-sn-glycero-3-phospho-(1D-myo-inositol-3-phosphate).

It belongs to the sorting nexin family.

The protein resides in the cytoplasm. The protein localises to the golgi apparatus membrane. It localises to the prevacuolar compartment membrane. Functionally, required for retention of late Golgi membrane proteins. Component of the retrieval machinery that functions by direct interaction with the cytosolic tails of certain TGN membrane proteins during the sorting/budding process at the prevacuolar compartment. Binds phosphatidylinositol 3-phosphate (PtdIns(P3)). This Neurospora crassa (strain ATCC 24698 / 74-OR23-1A / CBS 708.71 / DSM 1257 / FGSC 987) protein is Sorting nexin-3 (snx-3).